Consider the following 137-residue polypeptide: MSENEDLQKSFLDTVKYDEKGLVPAIVQDHETGKVLMMAWMNHESLLMTLEKKKACYWSRSRQKLWLKGESSGNMQDVHDILIDCDGDTILLKVSQKGGACHVGYHSCFYRKVKETLDMEICDTLMFNPDDVYGKKS.

Asp84 is a Mg(2+) binding site. Residue Cys85 participates in Zn(2+) binding. Mg(2+) contacts are provided by Asp86 and Asp88. Residues Cys101 and Cys108 each coordinate Zn(2+).

The protein belongs to the PRA-CH family. As to quaternary structure, homodimer. Mg(2+) serves as cofactor. It depends on Zn(2+) as a cofactor.

Its subcellular location is the cytoplasm. The enzyme catalyses 1-(5-phospho-beta-D-ribosyl)-5'-AMP + H2O = 1-(5-phospho-beta-D-ribosyl)-5-[(5-phospho-beta-D-ribosylamino)methylideneamino]imidazole-4-carboxamide. It participates in amino-acid biosynthesis; L-histidine biosynthesis; L-histidine from 5-phospho-alpha-D-ribose 1-diphosphate: step 3/9. Functionally, catalyzes the hydrolysis of the adenine ring of phosphoribosyl-AMP. This is Phosphoribosyl-AMP cyclohydrolase from Chlorobium phaeobacteroides (strain DSM 266 / SMG 266 / 2430).